Reading from the N-terminus, the 138-residue chain is Basic phospholipase A2 homolog Ts-K49b (138 aa).

The first 16 residues, 1 to 16 (MRTLWIMAVLLVGVEG), serve as a signal peptide directing secretion. Intrachain disulfides connect Cys-42-Cys-131, Cys-44-Cys-60, Cys-65-Cys-138, Cys-66-Cys-104, Cys-73-Cys-97, and Cys-91-Cys-102. Residues 121 to 133 (KKKKINLKLFCKK) are important for membrane-damaging activities in eukaryotes and bacteria; heparin-binding.

Expressed by the venom gland.

Its subcellular location is the secreted. Snake venom phospholipase A2 homolog that lacks catalytic activity. It shows myotoxic and weak anticoagulant activities. A model of myotoxic mechanism has been proposed: an apo Lys49-PLA2 is activated by the entrance of a hydrophobic molecule (e.g. fatty acid) at the hydrophobic channel of the protein leading to a reorientation of a monomer. This reorientation causes a transition between 'inactive' to 'active' states, causing alignment of C-terminal and membrane-docking sites (MDoS) side-by-side and putting the membrane-disruption sites (MDiS) in the same plane, exposed to solvent and in a symmetric position for both monomers. The MDoS region stabilizes the toxin on membrane by the interaction of charged residues with phospholipid head groups. Subsequently, the MDiS region destabilizes the membrane with penetration of hydrophobic residues. This insertion causes a disorganization of the membrane, allowing an uncontrolled influx of ions (i.e. calcium and sodium), and eventually triggering irreversible intracellular alterations and cell death. This is Basic phospholipase A2 homolog Ts-K49b from Trimeresurus stejnegeri (Chinese green tree viper).